The following is a 598-amino-acid chain: UvrABC system protein C (598 aa).

Residues 13-92 (SSPGVYLMKD…IKKYQPRYNV (80 aa)) form the GIY-YIG domain. In terms of domain architecture, UVR spans 206-241 (RSTISNLEKAIEKASQEQKFEHAAALYRTLTLIRQT).

It belongs to the UvrC family. In terms of assembly, interacts with UvrB in an incision complex.

It is found in the cytoplasm. In terms of biological role, the UvrABC repair system catalyzes the recognition and processing of DNA lesions. UvrC both incises the 5' and 3' sides of the lesion. The N-terminal half is responsible for the 3' incision and the C-terminal half is responsible for the 5' incision. This Chlamydia trachomatis serovar A (strain ATCC VR-571B / DSM 19440 / HAR-13) protein is UvrABC system protein C.